Here is a 69-residue protein sequence, read N- to C-terminus: Conotoxin LvVID (69 aa).

A signal peptide spans 1 to 17; that stretch reads VLIIAVLFLTACQLTTA. Positions 18–40 are excised as a propeptide; it reads ETYPRGQQRHHALRSTDKNSKLT. Cystine bridges form between cysteine 43–cysteine 57, cysteine 50–cysteine 61, and cysteine 56–cysteine 68.

Belongs to the conotoxin O1 superfamily. In terms of tissue distribution, expressed by the venom duct.

The protein localises to the secreted. This is Conotoxin LvVID from Conus lividus (Livid cone).